Reading from the N-terminus, the 513-residue chain is ATP synthase subunit alpha 2 (513 aa).

Residue Gly169–Thr176 coordinates ATP.

It belongs to the ATPase alpha/beta chains family. As to quaternary structure, F-type ATPases have 2 components, CF(1) - the catalytic core - and CF(0) - the membrane proton channel. CF(1) has five subunits: alpha(3), beta(3), gamma(1), delta(1), epsilon(1). CF(0) has three main subunits: a(1), b(2) and c(9-12). The alpha and beta chains form an alternating ring which encloses part of the gamma chain. CF(1) is attached to CF(0) by a central stalk formed by the gamma and epsilon chains, while a peripheral stalk is formed by the delta and b chains.

Its subcellular location is the cell inner membrane. It carries out the reaction ATP + H2O + 4 H(+)(in) = ADP + phosphate + 5 H(+)(out). Its function is as follows. Produces ATP from ADP in the presence of a proton gradient across the membrane. The alpha chain is a regulatory subunit. This Psychromonas ingrahamii (strain DSM 17664 / CCUG 51855 / 37) protein is ATP synthase subunit alpha 2.